The following is a 310-amino-acid chain: Glycerol-3-phosphate dehydrogenase [NAD(P)+] (310 aa).

Positions 19, 39, 40, and 87 each coordinate NADPH. Positions 87 and 115 each coordinate sn-glycerol 3-phosphate. S119 contributes to the NADPH binding site. Positions 170, 223, 233, 234, and 235 each coordinate sn-glycerol 3-phosphate. K170 serves as the catalytic Proton acceptor. R234 provides a ligand contact to NADPH. Residue E260 coordinates NADPH.

The protein belongs to the NAD-dependent glycerol-3-phosphate dehydrogenase family.

Its subcellular location is the cytoplasm. The catalysed reaction is sn-glycerol 3-phosphate + NAD(+) = dihydroxyacetone phosphate + NADH + H(+). It carries out the reaction sn-glycerol 3-phosphate + NADP(+) = dihydroxyacetone phosphate + NADPH + H(+). It participates in membrane lipid metabolism; glycerophospholipid metabolism. In terms of biological role, catalyzes the reduction of the glycolytic intermediate dihydroxyacetone phosphate (DHAP) to sn-glycerol 3-phosphate (G3P), the key precursor for phospholipid synthesis. This Synechococcus sp. (strain JA-3-3Ab) (Cyanobacteria bacterium Yellowstone A-Prime) protein is Glycerol-3-phosphate dehydrogenase [NAD(P)+].